The sequence spans 281 residues: 2,3,4,5-tetrahydropyridine-2,6-dicarboxylate N-succinyltransferase (281 aa).

Belongs to the transferase hexapeptide repeat family.

It localises to the cytoplasm. It carries out the reaction (S)-2,3,4,5-tetrahydrodipicolinate + succinyl-CoA + H2O = (S)-2-succinylamino-6-oxoheptanedioate + CoA. Its pathway is amino-acid biosynthesis; L-lysine biosynthesis via DAP pathway; LL-2,6-diaminopimelate from (S)-tetrahydrodipicolinate (succinylase route): step 1/3. The protein is 2,3,4,5-tetrahydropyridine-2,6-dicarboxylate N-succinyltransferase of Methylobacterium sp. (strain 4-46).